The primary structure comprises 148 residues: Large ribosomal subunit protein bL9 (148 aa).

Belongs to the bacterial ribosomal protein bL9 family.

Functionally, binds to the 23S rRNA. This Bacillus cytotoxicus (strain DSM 22905 / CIP 110041 / 391-98 / NVH 391-98) protein is Large ribosomal subunit protein bL9.